Reading from the N-terminus, the 321-residue chain is MQFYFSQIGRLFELIAAGKIRALLLYGPDKGYIEKICTYLIKNLNMLQSSIEYEDLNILSLDILLNSPNFFGQKELIKVRSIGNSLDKNLKTILSSDYINFPVFIGEDMNSSGSVKKFFETEEYLAVVACYHDDEAKIERIILGKLAKTNKVISKEAITYLKTHLKGDHALICSEINKLIFFAHDVHEITLNHVLEVISSEITANGSNLAIYFSKKDYSNFLQELDILKKQNINEVLIIRALIRHYLNLYIVLSKVKNGECLEIAIKSLSPPIFYHNINDFTKIVHALSLTECIKTLKLLQQAEVDYKLNPASFDLFQSIL.

The protein belongs to the DNA polymerase HolA subunit family. As to quaternary structure, component of the DNA clamp loading complex consisting of tau(3):delta(1):delta'(1). The DNA polymerase III holoenzyme complex contains at least 10 different subunits organized into 3 functionally essential subassemblies: the Pol III core, the beta sliding clamp processivity factor and the clamp-loading complex. The Pol III core (subunits alpha, epsilon and theta) contains the polymerase and the 3'-5' exonuclease proofreading activities. The polymerase is tethered to the template via the dimeric beta sliding clamp processivity factor. The DNA clamp-loading complex assembles the beta sliding clamp onto the primed template and plays a central role in the organization and communication at the replication fork.

It carries out the reaction DNA(n) + a 2'-deoxyribonucleoside 5'-triphosphate = DNA(n+1) + diphosphate. In terms of biological role, part of the beta sliding clamp loading complex, which hydrolyzes ATP to load the beta clamp onto primed DNA to form the DNA replication pre-initiation complex. DNA polymerase III is a complex, multichain enzyme responsible for most of the replicative synthesis in bacteria. This DNA polymerase also exhibits 3'-5' exonuclease activity. The delta subunit is the wrench that will open the beta subunit dimer. The DNA clamp loading complex (tau(3),delta,delta') is thought to load beta dimers onto DNA by binding ATP which alters the complex's conformation so it can bind beta sliding clamp dimers and open them at one interface. Primed DNA is recognized, ATP is hydrolyzed releasing the clamp loading complex and closing the beta sliding clamp ring around the primed DNA. This chain is Probable DNA polymerase III subunit delta, found in Rickettsia prowazekii (strain Madrid E).